The sequence spans 331 residues: Cytosolic 5'-nucleotidase 3A (331 aa).

D83 functions as the Nucleophile in the catalytic mechanism. Mg(2+) contacts are provided by D83 and D85. The active-site Proton donor is the D85. Position 130 (E130) interacts with CMP. N(7)-methyl-GMP contacts are provided by E130 and S151. Residues 198–199 (SA) and K247 contribute to the substrate site. D272 contacts Mg(2+).

The protein belongs to the pyrimidine 5'-nucleotidase family.

The protein resides in the cytoplasm. It carries out the reaction N(7)-methyl-GMP + H2O = N(7)-methylguanosine + phosphate. The catalysed reaction is a ribonucleoside 5'-phosphate + H2O = a ribonucleoside + phosphate. In terms of biological role, nucleotidase which shows specific activity towards cytidine monophosphate (CMP) and 7-methylguanosine monophosphate (m(7)GMP). CMP seems to be the preferred substrate. The polypeptide is Cytosolic 5'-nucleotidase 3A (NT5C3A) (Gallus gallus (Chicken)).